A 241-amino-acid polypeptide reads, in one-letter code: Uridylate kinase (241 aa).

15–18 (KLSG) provides a ligand contact to ATP. Residues 23–28 (GSEGFG) form an involved in allosteric activation by GTP region. Glycine 57 is a UMP binding site. The ATP site is built by glycine 58 and arginine 62. UMP-binding positions include aspartate 77 and 138 to 145 (TGNPFCTT). 3 residues coordinate ATP: threonine 165, tyrosine 171, and aspartate 174.

This sequence belongs to the UMP kinase family. As to quaternary structure, homohexamer.

Its subcellular location is the cytoplasm. The enzyme catalyses UMP + ATP = UDP + ADP. Its pathway is pyrimidine metabolism; CTP biosynthesis via de novo pathway; UDP from UMP (UMPK route): step 1/1. Its activity is regulated as follows. Allosterically activated by GTP. Inhibited by UTP. Its function is as follows. Catalyzes the reversible phosphorylation of UMP to UDP. The sequence is that of Uridylate kinase from Shewanella amazonensis (strain ATCC BAA-1098 / SB2B).